A 157-amino-acid polypeptide reads, in one-letter code: Small ribosomal subunit protein uS7 (157 aa).

Belongs to the universal ribosomal protein uS7 family. In terms of assembly, part of the 30S ribosomal subunit. Contacts proteins S9 and S11.

In terms of biological role, one of the primary rRNA binding proteins, it binds directly to 16S rRNA where it nucleates assembly of the head domain of the 30S subunit. Is located at the subunit interface close to the decoding center, probably blocks exit of the E-site tRNA. This Delftia acidovorans (strain DSM 14801 / SPH-1) protein is Small ribosomal subunit protein uS7.